The following is a 144-amino-acid chain: 3-dehydroquinate dehydratase (144 aa).

Residue tyrosine 22 is the Proton acceptor of the active site. Substrate-binding residues include asparagine 74, histidine 80, and aspartate 87. Histidine 100 functions as the Proton donor in the catalytic mechanism. Residues 101–102 (LS) and arginine 111 contribute to the substrate site.

The protein belongs to the type-II 3-dehydroquinase family. In terms of assembly, homododecamer.

The enzyme catalyses 3-dehydroquinate = 3-dehydroshikimate + H2O. It functions in the pathway metabolic intermediate biosynthesis; chorismate biosynthesis; chorismate from D-erythrose 4-phosphate and phosphoenolpyruvate: step 3/7. Catalyzes a trans-dehydration via an enolate intermediate. The chain is 3-dehydroquinate dehydratase from Clostridium perfringens (strain ATCC 13124 / DSM 756 / JCM 1290 / NCIMB 6125 / NCTC 8237 / Type A).